The primary structure comprises 328 residues: L-lactate dehydrogenase (328 aa).

Residues V18, E39, K46, Y71, and 85–86 (GA) contribute to the NAD(+) site. Positions 88 and 94 each coordinate substrate. NAD(+)-binding positions include S107, 124–126 (AAN), and S149. Residue 126 to 129 (NPVD) participates in substrate binding. 154–157 (DSAR) serves as a coordination point for substrate. The beta-D-fructose 1,6-bisphosphate site is built by R159 and H174. H181 functions as the Proton acceptor in the catalytic mechanism. Phosphotyrosine is present on Y226. T235 contributes to the substrate binding site.

The protein belongs to the LDH/MDH superfamily. LDH family. As to quaternary structure, homotetramer.

It is found in the cytoplasm. It catalyses the reaction (S)-lactate + NAD(+) = pyruvate + NADH + H(+). It participates in fermentation; pyruvate fermentation to lactate; (S)-lactate from pyruvate: step 1/1. Its activity is regulated as follows. Allosterically activated by fructose 1,6-bisphosphate (FBP). Catalyzes the conversion of lactate to pyruvate. This Streptococcus thermophilus (strain CNRZ 1066) protein is L-lactate dehydrogenase.